The chain runs to 681 residues: Peroxisomal acyl-coenzyme A oxidase 2 (681 aa).

A phosphoserine mark is found at S3 and S9. T13 is modified (phosphothreonine). N6-succinyllysine occurs at positions 66, 137, 453, and 561. A Microbody targeting signal motif is present at residues 679 to 681 (SKL).

Belongs to the acyl-CoA oxidase family. As to quaternary structure, homodimer. The cofactor is FAD. Present in all tissues tested: heart, brain, placenta, lung, liver, skeletal muscle, kidney and pancreas. Most abundant in heart, liver and kidney.

It localises to the peroxisome. It catalyses the reaction (25R)-3alpha,7alpha,12alpha-trihydroxy-5beta-cholestan-26-oyl-CoA + A + H2O = (24R,25R)-3alpha,7alpha,12alpha,24-tetrahydroxy-5beta-cholestan-26-oyl-CoA + AH2. It carries out the reaction (25S)-3alpha,7alpha,12alpha-trihydroxy-5beta-cholestan-26-oyl-CoA + O2 = (24E)-3alpha,7alpha,12alpha-trihydroxy-5beta-cholest-24-en-26-oyl-CoA + H2O2. Oxidizes the CoA esters of the bile acid intermediates di- and tri-hydroxycholestanoic acids. Capable of oxidizing short as well as long chain 2-methyl branched fatty acids. The chain is Peroxisomal acyl-coenzyme A oxidase 2 from Homo sapiens (Human).